The sequence spans 894 residues: Myb-like protein K (894 aa).

Over residues 93–139 the composition is skewed to low complexity; it reads LQQQQQSPVTNVATNTPPTLQHSISSPSPNNFNNNNNANNQFLSPNS. Disordered stretches follow at residues 93–221, 299–353, 492–539, and 601–659; these read LQQQ…SASS, QVGN…QPIT, QQQQ…LEMI, and AATT…HWTS. The span at 140 to 149 shows a compositional bias: polar residues; sequence PQVAKSSPSQ. Positions 150 to 221 are enriched in low complexity; that stretch reads NNPSTPIANT…SQSLNSSASS (72 aa). Residues 300 to 309 are compositionally biased toward polar residues; the sequence is VGNPMQQSND. Composition is skewed to low complexity over residues 310 to 353 and 492 to 527; these read MQPQ…QPIT and QQQQ…PQQM. 2 stretches are compositionally biased toward basic and acidic residues: residues 611–640 and 649–659; these read GKEE…SKKD and ASKEKTSHWTS. Positions 649-704 constitute an HTH myb-type domain; the sequence is ASKEKTSHWTSEEHNKFLEAVQQFGIKDYHAIAKFVQTRNHHQVRTHVNTYLKNQK. A DNA-binding region (H-T-H motif) is located at residues 677–700; the sequence is YHAIAKFVQTRNHHQVRTHVNTYL. The segment at 703–852 is disordered; the sequence is QKKAEAATSS…EYNSGFDSNS (150 aa). 3 stretches are compositionally biased toward low complexity: residues 710–742, 751–805, and 815–845; these read TSST…QPPI, QQQQ…QQPQ, and PPNN…NEYN.

The protein localises to the nucleus. The sequence is that of Myb-like protein K (mybK) from Dictyostelium discoideum (Social amoeba).